Here is a 517-residue protein sequence, read N- to C-terminus: Ribonuclease Y (517 aa).

Residues 1–21 (MIEVVVGIGAGLIGIGAGYLV) form a helical membrane-spanning segment. The region spanning 207-273 (LINVVNIKND…TRVIELLVED (67 aa)) is the KH domain. In terms of domain architecture, HD spans 333–426 (ALAHSLEVAH…VCAADALSAA (94 aa)).

This sequence belongs to the RNase Y family.

It localises to the cell membrane. Endoribonuclease that initiates mRNA decay. In Campylobacter fetus subsp. fetus (strain 82-40), this protein is Ribonuclease Y.